The following is a 1205-amino-acid chain: Nitric oxide synthase 3 (1205 aa).

The interval 1–73 (MGNLKSVGQE…PPEGPKFPRV (73 aa)) is disordered. Gly2 carries the N-myristoyl glycine lipid modification. S-palmitoyl cysteine attachment occurs at residues Cys15 and Cys26. Gly residues predominate over residues 15 to 27 (CGLGLGLGLGLCG). A compositionally biased stretch (pro residues) spans 33 to 47 (TPAPEPSRAPAPATP). Cys96 and Cys101 together coordinate Zn(2+). An interaction with NOSIP region spans residues 100–488 (RCLGSLVLPR…PDPWKGSAAK (389 aa)). Ser104 lines the (6R)-L-erythro-5,6,7,8-tetrahydrobiopterin pocket. At Ser116 the chain carries Phosphoserine; by CDK5. Residue Cys186 coordinates heme b. L-arginine is bound by residues Gln249, Trp358, Tyr359, Glu363, and Asn368. 3 residues coordinate (6R)-L-erythro-5,6,7,8-tetrahydrobiopterin: Ala448, Trp449, and Phe462. Residue Tyr477 participates in heme b binding. The calmodulin-binding stretch occupies residues 492–512 (IARKKTFKEVANAVKISASLM). Thr497 carries the post-translational modification Phosphothreonine; by AMPK. In terms of domain architecture, Flavodoxin-like spans 522-705 (ASILYASETV…AFRGWAQAAF (184 aa)). Ser528, Glu529, Thr530, Arg532, Ser574, and Thr575 together coordinate FMN. A phosphoserine mark is found at Ser617, Ser635, and Ser640. FMN is bound by residues Ser656, Cys663, Glu689, and Gln693. Residues 758 to 1004 (RKMFQATVLS…IRAAPSFRLP (247 aa)) enclose the FAD-binding FR-type domain. Residue Arg778 participates in NADP(+) binding. An FAD-binding site is contributed by His800. Residues 820 to 848 (EDPTPPTESVGVEQLEKGSPGGPPPSWVR) are disordered. Ser838 bears the Phosphoserine mark. FAD contacts are provided by Arg940, Tyr942, Ser943, Thr958, Ala960, Tyr964, Val977, Cys978, and Ser979. The NADP(+) site is built by Thr1018, Arg1051, Ser1080, Arg1081, Lys1087, Tyr1089, and Gln1091. A Phosphothreonine modification is found at Thr1177. Ser1179 is modified (phosphoserine; by AMPK). Ser1181 bears the Phosphoserine mark.

Belongs to the NOS family. Homodimer. Interacts with NOSIP and NOSTRIN. Interacts with HSP90AB1. Forms a complex with ASL, ASS1 and SLC7A1; the complex regulates cell-autonomous L-arginine synthesis and citrulline recycling while channeling extracellular L-arginine to nitric oxide synthesis pathway. Heme b is required as a cofactor. FAD serves as cofactor. The cofactor is FMN. It depends on (6R)-L-erythro-5,6,7,8-tetrahydrobiopterin as a cofactor. Phosphorylation by AMPK at Ser-1179 in the presence of Ca(2+)-calmodulin (CaM) activates activity. In absence of Ca(2+)-calmodulin, AMPK also phosphorylates Thr-497, resulting in inhibition of activity. Phosphorylation of Ser-116 by CDK5 reduces activity.

It localises to the membrane. The protein localises to the caveola. The protein resides in the cytoplasm. Its subcellular location is the cytoskeleton. It is found in the golgi apparatus. It localises to the cell membrane. The catalysed reaction is 2 L-arginine + 3 NADPH + 4 O2 + H(+) = 2 L-citrulline + 2 nitric oxide + 3 NADP(+) + 4 H2O. Stimulated by calcium/calmodulin. Inhibited by NOSIP and NOSTRIN. Functionally, produces nitric oxide (NO) which is implicated in vascular smooth muscle relaxation through a cGMP-mediated signal transduction pathway. NO mediates vascular endothelial growth factor (VEGF)-induced angiogenesis in coronary vessels and promotes blood clotting through the activation of platelets. This is Nitric oxide synthase 3 (NOS3) from Sus scrofa (Pig).